Consider the following 606-residue polypeptide: Zinc metalloproteinase-disintegrin-like HF3 (606 aa).

The N-terminal stretch at 1-20 is a signal peptide; sequence MIQVLLVTICLAAFPYQGSS. The propeptide occupies 21-190; the sequence is IILESGNVND…KKASQLVVTA (170 aa). Residues 199–395 enclose the Peptidase M12B domain; it reads KYIELVILAD…YKPQCILNEP (197 aa). Glutamate 202 lines the Ca(2+) pocket. Asparagine 259 carries an N-linked (GlcNAc...) asparagine glycan. Aspartate 286 is a binding site for Ca(2+). Intrachain disulfides connect cysteine 310-cysteine 390, cysteine 350-cysteine 374, and cysteine 352-cysteine 357. Residue asparagine 313 is glycosylated (N-linked (GlcNAc...) asparagine). Histidine 335 contributes to the Zn(2+) binding site. Residue glutamate 336 is part of the active site. Zn(2+) is bound by residues histidine 339 and histidine 345. The N-linked (GlcNAc...) asparagine glycan is linked to asparagine 373. Ca(2+)-binding residues include cysteine 390, asparagine 393, valine 405, asparagine 408, leucine 410, glutamate 412, glutamate 415, and aspartate 418. A Disintegrin domain is found at 403–489; that stretch reads PPVCGNELLE…DCPTDDFKRN (87 aa). Intrachain disulfides connect cysteine 406-cysteine 435, cysteine 417-cysteine 430, cysteine 419-cysteine 425, cysteine 429-cysteine 452, cysteine 443-cysteine 449, cysteine 448-cysteine 474, cysteine 461-cysteine 481, cysteine 468-cysteine 500, cysteine 493-cysteine 505, cysteine 512-cysteine 562, cysteine 527-cysteine 569, cysteine 540-cysteine 550, cysteine 557-cysteine 594, and cysteine 588-cysteine 599. The D/ECD-tripeptide signature appears at 467–469; sequence ECD. Ca(2+)-binding residues include aspartate 469, glutamate 472, and aspartate 484. Asparagine 519 carries N-linked (GlcNAc...) asparagine glycosylation. Asparagine 584 carries an N-linked (GlcNAc...) asparagine glycan.

The protein belongs to the venom metalloproteinase (M12B) family. P-III subfamily. P-IIIa sub-subfamily. Monomer. Requires Zn(2+) as cofactor. As to expression, expressed by the venom gland.

The protein localises to the secreted. Functionally, the metalloproteinase-disintegrin-like HF3 is a potent hemorrhagic toxin that activates macrophages for phagocytosis through integrin alpha-M/beta-2 (ITGAM/ITGB2). It inhibits collagen-induced platelet aggregation. This protein shows cleavage specificity for substrate for leucine at P1' position, followed by hydrophobic residues in P2'. This chain is Zinc metalloproteinase-disintegrin-like HF3, found in Bothrops jararaca (Jararaca).